A 494-amino-acid polypeptide reads, in one-letter code: Costunolide synthase (494 aa).

The chain crosses the membrane as a helical span at residues 3 to 23; that stretch reads PLTIVSLVVASLFLFAFWALS. C432 is a heme binding site.

The protein belongs to the cytochrome P450 family. Heme is required as a cofactor.

It localises to the membrane. It catalyses the reaction germacra-1(10),4,11(13)-trien-12-oate + reduced [NADPH--hemoprotein reductase] + O2 = (+)-costunolide + oxidized [NADPH--hemoprotein reductase] + 2 H2O. Hydroxylates germacrene A acid to 6-alpha-hydroxy-germacrne A acid, a precursor of sesquiterpene lactones that spontaneously undergoes a lactonization which yields costunolide. Costunolide can then spontaneously conjugate to glutathione or cysteine. In Cichorium intybus (Chicory), this protein is Costunolide synthase (CYP71BL3).